The primary structure comprises 922 residues: Two-component sensor PprA (922 aa).

Low complexity predominate over residues 1 to 10 (MFEFSRSSSA). The disordered stretch occupies residues 1 to 22 (MFEFSRSSSAEAERPEPFSQEG). Residues 506–558 (VKTRYRLADGQGNWHWLYDEAKLLRDAQGLPSEAVGLWLDVTEQHLAAQRIAE) form the PAC 1 domain. In terms of domain architecture, PAS spans 559–622 (SEERYRVLVE…EDASALRARL (64 aa)). A PAC 2 domain is found at 632–684 (EVPELRFNLPGQRFLWLVWAERPLFDARGELCEVQAVGRDNTPVRRAQQQLAQ). Residues 697-916 (GLAHEVKQPL…LFVVRLPLAA (220 aa)) enclose the Histidine kinase domain. At histidine 700 the chain carries Phosphohistidine; by autocatalysis.

In terms of processing, autophosphorylated.

The enzyme catalyses ATP + protein L-histidine = ADP + protein N-phospho-L-histidine.. In terms of biological role, member of the two-component regulatory system PprA/PprB involved in biofilm formation by controlling the expression of many related genes including type IVb pili major subunit flp pilin, adhesin bapA or cupE fimbriae. Functions as a heme sensor histidine kinase which is autophosphorylated at a histidine residue and transfers its phosphate group to PprB. In Pseudomonas aeruginosa (strain ATCC 15692 / DSM 22644 / CIP 104116 / JCM 14847 / LMG 12228 / 1C / PRS 101 / PAO1), this protein is Two-component sensor PprA.